Reading from the N-terminus, the 287-residue chain is Polyamine aminopropyltransferase (287 aa).

The 234-residue stretch at 9–242 folds into the PABS domain; that stretch reads GSWLDEYQND…GIWSWTFASI (234 aa). Glutamine 36 contacts S-methyl-5'-thioadenosine. Residues histidine 67 and aspartate 91 each coordinate spermidine. S-methyl-5'-thioadenosine contacts are provided by residues glutamate 111 and 143–144; that span reads NG. Aspartate 162 serves as the catalytic Proton acceptor. Proline 169 is a binding site for S-methyl-5'-thioadenosine.

It belongs to the spermidine/spermine synthase family. In terms of assembly, homodimer or homotetramer.

Its subcellular location is the cytoplasm. It carries out the reaction S-adenosyl 3-(methylsulfanyl)propylamine + putrescine = S-methyl-5'-thioadenosine + spermidine + H(+). Its pathway is amine and polyamine biosynthesis; spermidine biosynthesis; spermidine from putrescine: step 1/1. In terms of biological role, catalyzes the irreversible transfer of a propylamine group from the amino donor S-adenosylmethioninamine (decarboxy-AdoMet) to putrescine (1,4-diaminobutane) to yield spermidine. The protein is Polyamine aminopropyltransferase of Prochlorococcus marinus (strain SARG / CCMP1375 / SS120).